Consider the following 177-residue polypeptide: Adenine phosphoribosyltransferase (177 aa).

Belongs to the purine/pyrimidine phosphoribosyltransferase family. In terms of assembly, homodimer.

It is found in the cytoplasm. It carries out the reaction AMP + diphosphate = 5-phospho-alpha-D-ribose 1-diphosphate + adenine. It functions in the pathway purine metabolism; AMP biosynthesis via salvage pathway; AMP from adenine: step 1/1. Functionally, catalyzes a salvage reaction resulting in the formation of AMP, that is energically less costly than de novo synthesis. In Chlorobium chlorochromatii (strain CaD3), this protein is Adenine phosphoribosyltransferase.